We begin with the raw amino-acid sequence, 477 residues long: Pentatricopeptide repeat-containing protein At1g55630 (477 aa).

9 PPR repeats span residues 151-185 (TANCYHLLMKIFAECGEYKAMCRLIDEMIKDGYPT), 186-220 (TACTFNLLICTCGEAGLARDVVEQFIKSKTFNYRP), 221-255 (YKHSYNAILHSLLGVKQYKLIDWVYEQMLEDGFTP), 256-290 (DVLTYNIVMFANFRLGKTDRLYRLLDEMVKDGFSP), 291-325 (DLYTYNILLHHLATGNKPLAALNLLNHMREVGVEP), 326-360 (GVIHFTTLIDGLSRAGKLEACKYFMDETVKVGCTP), 361-395 (DVVCYTVMITGYISGGELEKAEEMFKEMTEKGQLP), 396-430 (NVFTYNSMIRGFCMAGKFKEACALLKEMESRGCNP), and 431-465 (NFVVYSTLVNNLKNAGKVLEAHEVVKDMVEKGHYV).

It belongs to the PPR family. P subfamily.

The chain is Pentatricopeptide repeat-containing protein At1g55630 from Arabidopsis thaliana (Mouse-ear cress).